The chain runs to 464 residues: Glucan 1,3-beta-glucosidase 3 (464 aa).

It belongs to the glycosyl hydrolase 5 (cellulase A) family.

The enzyme catalyses Successive hydrolysis of beta-D-glucose units from the non-reducing ends of (1-&gt;3)-beta-D-glucans, releasing alpha-glucose.. The protein is Glucan 1,3-beta-glucosidase 3 (exg3) of Schizosaccharomyces pombe (strain 972 / ATCC 24843) (Fission yeast).